A 102-amino-acid chain; its full sequence is Small ribosomal subunit protein uS10 (102 aa).

The protein belongs to the universal ribosomal protein uS10 family. As to quaternary structure, part of the 30S ribosomal subunit.

Functionally, involved in the binding of tRNA to the ribosomes. The polypeptide is Small ribosomal subunit protein uS10 (Streptococcus thermophilus (strain ATCC BAA-250 / LMG 18311)).